Consider the following 156-residue polypeptide: Arginine repressor (156 aa).

The protein belongs to the ArgR family.

It is found in the cytoplasm. The protein operates within amino-acid biosynthesis; L-arginine biosynthesis [regulation]. Functionally, regulates arginine biosynthesis genes. This Shewanella sp. (strain ANA-3) protein is Arginine repressor.